Here is a 326-residue protein sequence, read N- to C-terminus: tRNA-modifying protein YgfZ (326 aa).

Folate contacts are provided by Trp-27 and Trp-189.

The protein belongs to the tRNA-modifying YgfZ family.

Its subcellular location is the cytoplasm. Functionally, folate-binding protein involved in regulating the level of ATP-DnaA and in the modification of some tRNAs. It is probably a key factor in regulatory networks that act via tRNA modification, such as initiation of chromosomal replication. The protein is tRNA-modifying protein YgfZ of Escherichia coli O6:K15:H31 (strain 536 / UPEC).